The primary structure comprises 766 residues: Phospholipid phosphatase-related protein type 4 (766 aa).

Residue Ser-37 is modified to Phosphoserine. 4 consecutive transmembrane segments (helical) span residues 68–88 (LPCF…SLYF), 120–140 (AIPF…TIMV), 179–199 (FVGV…IIQL), and 248–268 (SFPS…SMYF). The N-linked (GlcNAc...) asparagine glycan is linked to Asn-269. The next 2 helical transmembrane spans lie at 277-297 (KLLK…CGLT) and 309-329 (VYCG…YAVG). Position 347 is a phosphoserine (Ser-347). The N-linked (GlcNAc...) asparagine glycan is linked to Asn-363. Ser-386 carries the phosphoserine modification. An N-linked (GlcNAc...) asparagine glycan is attached at Asn-433. Ser-439 carries the phosphoserine modification. 2 disordered regions span residues 454–503 (SKNE…GNQY) and 510–529 (TVPG…IQSR). Asn-456 is a glycosylation site (N-linked (GlcNAc...) asparagine). A phosphoserine mark is found at Ser-462 and Ser-474. 2 N-linked (GlcNAc...) asparagine glycosylation sites follow: Asn-515 and Asn-545. The residue at position 608 (Ser-608) is a Phosphoserine. Disordered regions lie at residues 634–654 (PIIQ…KWKA), 672–705 (DSES…GITT), and 741–766 (PERS…PYKD). The segment covering 688–702 (RKRKHIDSNEHHHHG) has biased composition (basic residues). The span at 743-752 (RSNSPENTRN) shows a compositional bias: polar residues.

The protein belongs to the PA-phosphatase related phosphoesterase family. In terms of processing, O-glycosylated. Probably at Ser-347. As to expression, specifically expressed in neurons (at protein level).

Its subcellular location is the postsynaptic density membrane. Functionally, postsynaptic density membrane protein that indirectly regulates glutamatergic synaptic transmission through lysophosphatidic acid (LPA)-mediated signaling pathways. Binds lysophosphatidic acid (LPA) and mediates its internalization into cells. Could act as receptor or a transporter of this lipid at the post-synaptic membrane. Modulates lysophosphatidic acid (LPA) activity in neuron axonal outgrowth during development by attenuating phospholipid-induced axon collapse. This Rattus norvegicus (Rat) protein is Phospholipid phosphatase-related protein type 4.